A 267-amino-acid polypeptide reads, in one-letter code: Putative methylsterol monooxygenase DDB_G0270946 (267 aa).

3 helical membrane-spanning segments follow: residues 31–51 (FIAHQVFYFGCFIPFLIADFI), 72–92 (YCAIKVILTQVLIQLPMMYIF), and 110–130 (IPYLLLTLVSSFIIEDFYFYW). A Fatty acid hydroxylase domain is found at 119–249 (SSFIIEDFYF…FTYLDKIFGT (131 aa)). The Histidine box-1 motif lies at 132-136 (HRALH). The Histidine box-2 motif lies at 145 to 149 (HKVHH). A Histidine box-3 motif is present at residues 224–230 (FHDYHHE).

It belongs to the sterol desaturase family. The cofactor is Fe cation.

It is found in the endoplasmic reticulum membrane. The catalysed reaction is 4,4-dimethyl-5alpha-cholest-7-en-3beta-ol + 6 Fe(II)-[cytochrome b5] + 3 O2 + 5 H(+) = 4alpha-carboxy-4beta-methyl-5alpha-cholest-7-ene-3beta-ol + 6 Fe(III)-[cytochrome b5] + 4 H2O. Its pathway is steroid biosynthesis; zymosterol biosynthesis; zymosterol from lanosterol: step 3/6. The chain is Putative methylsterol monooxygenase DDB_G0270946 from Dictyostelium discoideum (Social amoeba).